A 190-amino-acid polypeptide reads, in one-letter code: Potassium-transporting ATPase KdpC subunit (190 aa).

Residues 13–33 (LLLILTLITGILYPIVTTGFA) form a helical membrane-spanning segment.

The protein belongs to the KdpC family. The system is composed of three essential subunits: KdpA, KdpB and KdpC.

Its subcellular location is the cell inner membrane. Part of the high-affinity ATP-driven potassium transport (or Kdp) system, which catalyzes the hydrolysis of ATP coupled with the electrogenic transport of potassium into the cytoplasm. This subunit acts as a catalytic chaperone that increases the ATP-binding affinity of the ATP-hydrolyzing subunit KdpB by the formation of a transient KdpB/KdpC/ATP ternary complex. The polypeptide is Potassium-transporting ATPase KdpC subunit (Leptospira interrogans serogroup Icterohaemorrhagiae serovar copenhageni (strain Fiocruz L1-130)).